Here is a 493-residue protein sequence, read N- to C-terminus: Mitochondrial distribution and morphology protein 10 (493 aa).

It belongs to the MDM10 family. In terms of assembly, component of the ER-mitochondria encounter structure (ERMES) or MDM complex, composed of MMM1, MDM10, MDM12 and MDM34. Associates with the mitochondrial outer membrane sorting assembly machinery SAM(core) complex, which consists of SAM35, SAM37 and SAM50, to form a SAM(holo) complex.

Its subcellular location is the mitochondrion outer membrane. In terms of biological role, component of the ERMES/MDM complex, which serves as a molecular tether to connect the endoplasmic reticulum and mitochondria. Components of this complex are involved in the control of mitochondrial shape and protein biogenesis and may function in phospholipid exchange. MDM10 is involved in the late assembly steps of the general translocase of the mitochondrial outer membrane (TOM complex). Functions in the TOM40-specific route of the assembly of outer membrane beta-barrel proteins, including the association of TOM40 with the receptor TOM22 and small TOM proteins. Can associate with the SAM(core) complex as well as the MDM12-MMM1 complex, both involved in late steps of the major beta-barrel assembly pathway, that is responsible for biogenesis of all outer membrane beta-barrel proteins. May act as a switch that shuttles between both complexes and channels precursor proteins into the TOM40-specific pathway. Plays a role in mitochondrial morphology and in the inheritance of mitochondria. The chain is Mitochondrial distribution and morphology protein 10 from Saccharomyces cerevisiae (strain RM11-1a) (Baker's yeast).